We begin with the raw amino-acid sequence, 81 residues long: UPF0298 protein SAK_1599 (81 aa).

This sequence belongs to the UPF0298 family.

It is found in the cytoplasm. This chain is UPF0298 protein SAK_1599, found in Streptococcus agalactiae serotype Ia (strain ATCC 27591 / A909 / CDC SS700).